Consider the following 228-residue polypeptide: Sec-independent protein translocase protein TatB (228 aa).

The helical transmembrane segment at M1–G21 threads the bilayer. Disordered stretches follow at residues R138 to D162 and P195 to S228. Over residues A206 to S228 the composition is skewed to basic residues.

The protein belongs to the TatB family. As to quaternary structure, the Tat system comprises two distinct complexes: a TatABC complex, containing multiple copies of TatA, TatB and TatC subunits, and a separate TatA complex, containing only TatA subunits. Substrates initially bind to the TatABC complex, which probably triggers association of the separate TatA complex to form the active translocon.

The protein resides in the cell inner membrane. Its function is as follows. Part of the twin-arginine translocation (Tat) system that transports large folded proteins containing a characteristic twin-arginine motif in their signal peptide across membranes. Together with TatC, TatB is part of a receptor directly interacting with Tat signal peptides. TatB may form an oligomeric binding site that transiently accommodates folded Tat precursor proteins before their translocation. The chain is Sec-independent protein translocase protein TatB from Neisseria meningitidis serogroup A / serotype 4A (strain DSM 15465 / Z2491).